A 277-amino-acid polypeptide reads, in one-letter code: NH(3)-dependent NAD(+) synthetase (277 aa).

Residue G36–S43 coordinates ATP. Residue D42 participates in Mg(2+) binding. R118 lines the deamido-NAD(+) pocket. Residue T138 coordinates ATP. E143 provides a ligand contact to Mg(2+). ATP contacts are provided by K167 and S189.

This sequence belongs to the NAD synthetase family. In terms of assembly, homodimer.

It carries out the reaction deamido-NAD(+) + NH4(+) + ATP = AMP + diphosphate + NAD(+) + H(+). Its pathway is cofactor biosynthesis; NAD(+) biosynthesis; NAD(+) from deamido-NAD(+) (ammonia route): step 1/1. Functionally, catalyzes the ATP-dependent amidation of deamido-NAD to form NAD. Uses ammonia as a nitrogen source. This is NH(3)-dependent NAD(+) synthetase from Chlorobaculum tepidum (strain ATCC 49652 / DSM 12025 / NBRC 103806 / TLS) (Chlorobium tepidum).